We begin with the raw amino-acid sequence, 291 residues long: tRNA pseudouridine synthase B (291 aa).

The Nucleophile role is filled by Asp41.

Belongs to the pseudouridine synthase TruB family. Type 1 subfamily.

The enzyme catalyses uridine(55) in tRNA = pseudouridine(55) in tRNA. Its function is as follows. Responsible for synthesis of pseudouridine from uracil-55 in the psi GC loop of transfer RNAs. This is tRNA pseudouridine synthase B from Parasynechococcus marenigrum (strain WH8102).